The primary structure comprises 217 residues: Thymidylate kinase (217 aa).

Residue 12–19 (GIDGSGKS) participates in ATP binding.

This sequence belongs to the thymidylate kinase family.

It catalyses the reaction dTMP + ATP = dTDP + ADP. Its function is as follows. Phosphorylation of dTMP to form dTDP in both de novo and salvage pathways of dTTP synthesis. This is Thymidylate kinase from Cereibacter sphaeroides (strain ATCC 17023 / DSM 158 / JCM 6121 / CCUG 31486 / LMG 2827 / NBRC 12203 / NCIMB 8253 / ATH 2.4.1.) (Rhodobacter sphaeroides).